The sequence spans 390 residues: GTPase Obg (390 aa).

One can recognise an Obg domain in the interval 1 to 159; sequence MKFVDEASIL…RELLLELMLL (159 aa). The tract at residues 127–147 is disordered; sequence NTRFKSSVNRTPRQKTNGTPG. Positions 129-145 are enriched in polar residues; it reads RFKSSVNRTPRQKTNGT. One can recognise an OBG-type G domain in the interval 160-333; that stretch reads ADVGMLGMPN…LCWDVMTFIL (174 aa). GTP-binding positions include 166–173, 191–195, 213–216, 283–286, and 314–316; these read GMPNAGKS, FTTLV, DIPG, NKID, and SAA. Residues Ser-173 and Thr-193 each coordinate Mg(2+).

This sequence belongs to the TRAFAC class OBG-HflX-like GTPase superfamily. OBG GTPase family. Monomer. Requires Mg(2+) as cofactor.

It is found in the cytoplasm. Its function is as follows. An essential GTPase which binds GTP, GDP and possibly (p)ppGpp with moderate affinity, with high nucleotide exchange rates and a fairly low GTP hydrolysis rate. Plays a role in control of the cell cycle, stress response, ribosome biogenesis and in those bacteria that undergo differentiation, in morphogenesis control. This chain is GTPase Obg, found in Shigella sonnei (strain Ss046).